Here is a 346-residue protein sequence, read N- to C-terminus: Envelope glycoprotein M (346 aa).

Residues 1–12 (MALSRVDVINMR) lie on the Intravirion side of the membrane. The chain crosses the membrane as a helical span at residues 13–33 (IWVLSIICACLTYVNVTVHLV). Over 34–76 (AVHFPNLGFPCAYYEINDMKAINLSIRNDIRSLTPQLYLNPIQ) the chain is Virion surface. Residues 77–97 (LICYVVFMDICFFFILVYYIV) traverse the membrane as a helical segment. Residues 98-117 (CCVKVFSSEKTPNINQSTRD) are Intravirion-facing. The helical transmembrane segment at 118–140 (ITWMGDSLSCFQFVLTMDTYQFF) threads the bilayer. The Virion surface segment spans residues 141 to 147 (VTCLSFR). The helical transmembrane segment at 148–168 (LVTLAAFTYCLFFICFTAFTL) threads the bilayer. Over 169–199 (TMITQYQSSERSFFVLKRIHPKLKGTIKYKT) the chain is Intravirion. The chain crosses the membrane as a helical span at residues 200 to 220 (IIINMIELMLGFSSMVFAITI). At 221 to 236 (CLGLGNNFYIKSSTVA) the chain is on the virion surface side. The helical transmembrane segment at 237 to 257 (FASINTFFVMSFVYSLVIELI) threads the bilayer. At 258 to 263 (LHQYVK) the chain is on the intravirion side. A helical membrane pass occupies residues 264–284 (VQFGLHFGILFGILGLTYPIL). At 285 to 293 (KYDSLFKTE) the chain is on the virion surface side. The chain crosses the membrane as a helical span at residues 294–314 (WTVKFIVNLAVITIVCLSFII). Topologically, residues 315–346 (CRLIRFFMRKHHNYKKLPTTVEDLDVLEEANE) are intravirion.

Belongs to the herpesviridae glycoprotein M family. Interacts (via N-terminus) with gN (via N-terminus). The gM-gN heterodimer forms the gCII complex.

It localises to the virion membrane. Its subcellular location is the host Golgi apparatus. The protein resides in the host trans-Golgi network. The protein localises to the host endosome membrane. It is found in the host nucleus inner membrane. In terms of biological role, envelope glycoprotein important for virion assembly and egress. Plays a role in the correct incorporation of gH-gL into virion membrane. Directs the glycoprotein N (gN) to the host trans-Golgi network. This is Envelope glycoprotein M from Homo sapiens (Human).